Here is a 206-residue protein sequence, read N- to C-terminus: Large ribosomal subunit protein uL4 (206 aa).

Residues 60 to 84 are disordered; the sequence is TAKPFKQKGTGHARQGSKRSPQFRG. Basic residues predominate over residues 64–76; that stretch reads FKQKGTGHARQGS.

Belongs to the universal ribosomal protein uL4 family. Part of the 50S ribosomal subunit.

Its function is as follows. One of the primary rRNA binding proteins, this protein initially binds near the 5'-end of the 23S rRNA. It is important during the early stages of 50S assembly. It makes multiple contacts with different domains of the 23S rRNA in the assembled 50S subunit and ribosome. In terms of biological role, forms part of the polypeptide exit tunnel. The polypeptide is Large ribosomal subunit protein uL4 (Rhodospirillum rubrum (strain ATCC 11170 / ATH 1.1.1 / DSM 467 / LMG 4362 / NCIMB 8255 / S1)).